The following is a 572-amino-acid chain: Proline--tRNA ligase (572 aa).

This sequence belongs to the class-II aminoacyl-tRNA synthetase family. ProS type 1 subfamily. In terms of assembly, homodimer.

It is found in the cytoplasm. The catalysed reaction is tRNA(Pro) + L-proline + ATP = L-prolyl-tRNA(Pro) + AMP + diphosphate. Functionally, catalyzes the attachment of proline to tRNA(Pro) in a two-step reaction: proline is first activated by ATP to form Pro-AMP and then transferred to the acceptor end of tRNA(Pro). As ProRS can inadvertently accommodate and process non-cognate amino acids such as alanine and cysteine, to avoid such errors it has two additional distinct editing activities against alanine. One activity is designated as 'pretransfer' editing and involves the tRNA(Pro)-independent hydrolysis of activated Ala-AMP. The other activity is designated 'posttransfer' editing and involves deacylation of mischarged Ala-tRNA(Pro). The misacylated Cys-tRNA(Pro) is not edited by ProRS. This Salmonella choleraesuis (strain SC-B67) protein is Proline--tRNA ligase.